Reading from the N-terminus, the 189-residue chain is Protein seele (189 aa).

An N-terminal signal peptide occupies residues 1–17; that stretch reads MLTKALILFGLLALAQG. One can recognise a Saposin B-type domain in the interval 23-176; the sequence is REVKCHVCKA…EQASYCDESP (154 aa). Intrachain disulfides connect Cys-27–Cys-172, Cys-30–Cys-165, and Cys-85–Cys-136. Residues 186-189 carry the Prevents secretion from ER motif; the sequence is KEEL.

This sequence belongs to the canopy family.

Its subcellular location is the endoplasmic reticulum. In terms of biological role, involved in embryonic dorsal-ventral patterning which is generated by a series of serine protease processing events where gd processes snk which cleaves ea which then processes spz into the activating ligand for the Toll receptor. Required during this process for the secretion of ea from the developing embryo into the perivitelline space and for ea processing. The protein is Protein seele of Drosophila melanogaster (Fruit fly).